The following is a 201-amino-acid chain: 3-mercaptopropionate dioxygenase (201 aa).

The Fe cation site is built by histidine 89, histidine 91, and histidine 142.

The protein belongs to the cysteine dioxygenase family. In terms of assembly, forms homodimer in the crystal; however, there is no evidence that the dimer exists under physiological conditions or has biological significance. It depends on Fe(2+) as a cofactor.

The catalysed reaction is 3-sulfanylpropanoate + O2 = 3-sulfinopropanoate + H(+). Functionally, thiol dioxygenase that catalyzes the dioxygenation of 3-mercaptopropionate (3-MPA) to 3-sulfinopropionate (3-SPA). To a lesser extent (40-fold lower efficiency), is also able to oxidize cysteine to cysteine sulfinate (CSA). Cannot use N-acetyl-L-cysteine, homocysteine, and cysteamine as substrates. The physiological role of this enzyme is unclear. This Pseudomonas aeruginosa (strain ATCC 15692 / DSM 22644 / CIP 104116 / JCM 14847 / LMG 12228 / 1C / PRS 101 / PAO1) protein is 3-mercaptopropionate dioxygenase.